We begin with the raw amino-acid sequence, 281 residues long: Bis(5'-nucleosyl)-tetraphosphatase, symmetrical (281 aa).

It belongs to the Ap4A hydrolase family.

The catalysed reaction is P(1),P(4)-bis(5'-adenosyl) tetraphosphate + H2O = 2 ADP + 2 H(+). Its function is as follows. Hydrolyzes diadenosine 5',5'''-P1,P4-tetraphosphate to yield ADP. The protein is Bis(5'-nucleosyl)-tetraphosphatase, symmetrical of Pectobacterium atrosepticum (strain SCRI 1043 / ATCC BAA-672) (Erwinia carotovora subsp. atroseptica).